We begin with the raw amino-acid sequence, 159 residues long: uncharacterized protein (159 aa).

Residues 1 to 13 are compositionally biased toward polar residues; that stretch reads MTQPTRPSVTCDQ. The disordered stretch occupies residues 1 to 57; the sequence is MTQPTRPSVTCDQGSSTIGGTAAQATTSSSATSGSNYQRDRLGRRPEIGVGGQPQIC. The span at 14-35 shows a compositional bias: low complexity; the sequence is GSSTIGGTAAQATTSSSATSGS. Residues 38-47 show a composition bias toward basic and acidic residues; the sequence is QRDRLGRRPE.

This is an uncharacterized protein from Homo sapiens (Human).